The chain runs to 325 residues: DNA-directed RNA polymerase subunit alpha (325 aa).

Residues 1-238 (MSLKSLLKGF…EHLTVFINFE (238 aa)) form an alpha N-terminal domain (alpha-NTD) region. The alpha C-terminal domain (alpha-CTD) stretch occupies residues 255 to 325 (LKASLSKHVE…LGLSFGMRDF (71 aa)).

The protein belongs to the RNA polymerase alpha chain family. As to quaternary structure, homodimer. The RNAP catalytic core consists of 2 alpha, 1 beta, 1 beta' and 1 omega subunit. When a sigma factor is associated with the core the holoenzyme is formed, which can initiate transcription.

It catalyses the reaction RNA(n) + a ribonucleoside 5'-triphosphate = RNA(n+1) + diphosphate. DNA-dependent RNA polymerase catalyzes the transcription of DNA into RNA using the four ribonucleoside triphosphates as substrates. The chain is DNA-directed RNA polymerase subunit alpha from Leptospira interrogans serogroup Icterohaemorrhagiae serovar copenhageni (strain Fiocruz L1-130).